A 282-amino-acid polypeptide reads, in one-letter code: DNA-3-methyladenine glycosylase 2 (282 aa).

The Proton acceptor role is filled by Asp-238.

It belongs to the alkylbase DNA glycosidase AlkA family. In terms of assembly, monomer.

It catalyses the reaction Hydrolysis of alkylated DNA, releasing 3-methyladenine, 3-methylguanine, 7-methylguanine and 7-methyladenine.. Its function is as follows. Hydrolysis of the deoxyribose N-glycosidic bond to excise 3-methyladenine, 3-methylguanine, 7-methylguanine, O2-methylthymine, and O2-methylcytosine from the damaged DNA polymer formed by alkylation lesions. This chain is DNA-3-methyladenine glycosylase 2 (alkA), found in Escherichia coli (strain K12).